The following is a 585-amino-acid chain: Formate--tetrahydrofolate ligase (585 aa).

Residue 65-72 participates in ATP binding; that stretch reads TPHGEGKT.

This sequence belongs to the formate--tetrahydrofolate ligase family.

It catalyses the reaction (6S)-5,6,7,8-tetrahydrofolate + formate + ATP = (6R)-10-formyltetrahydrofolate + ADP + phosphate. The protein operates within one-carbon metabolism; tetrahydrofolate interconversion. This is Formate--tetrahydrofolate ligase from Shewanella baltica (strain OS155 / ATCC BAA-1091).